A 271-amino-acid chain; its full sequence is 3-methyl-2-oxobutanoate hydroxymethyltransferase 2 (271 aa).

Mg(2+) contacts are provided by aspartate 53 and aspartate 92. 3-methyl-2-oxobutanoate-binding positions include 53 to 54 (DS), aspartate 92, and lysine 120. Residue glutamate 122 participates in Mg(2+) binding. Catalysis depends on glutamate 189, which acts as the Proton acceptor.

This sequence belongs to the PanB family. Homodecamer; pentamer of dimers. Mg(2+) serves as cofactor.

Its subcellular location is the cytoplasm. It carries out the reaction 3-methyl-2-oxobutanoate + (6R)-5,10-methylene-5,6,7,8-tetrahydrofolate + H2O = 2-dehydropantoate + (6S)-5,6,7,8-tetrahydrofolate. Its pathway is cofactor biosynthesis; (R)-pantothenate biosynthesis; (R)-pantoate from 3-methyl-2-oxobutanoate: step 1/2. In terms of biological role, catalyzes the reversible reaction in which hydroxymethyl group from 5,10-methylenetetrahydrofolate is transferred onto alpha-ketoisovalerate to form ketopantoate. The sequence is that of 3-methyl-2-oxobutanoate hydroxymethyltransferase 2 from Burkholderia lata (strain ATCC 17760 / DSM 23089 / LMG 22485 / NCIMB 9086 / R18194 / 383).